The chain runs to 1233 residues: Anion exchange protein 3 (1233 aa).

Pro residues predominate over residues 1–11 (MANGVIPPPGG). Disordered stretches follow at residues 1 to 320 (MANG…RRPH) and 431 to 500 (DDKD…DGHR). Topologically, residues 1–709 (MANGVIPPPG…DLRDALHSQC (709 aa)) are cytoplasmic. Positions 58 to 73 (DPEKPSRSFSERDFAF) are enriched in basic and acidic residues. 2 stretches are compositionally biased toward basic residues: residues 74–97 (HRHISHHTHHPLSARLPPPHKLRR) and 104–113 (RHTRRKRKKE). Residues 137–153 (GEEEEEEEEEGESETEA) show a composition bias toward acidic residues. Phosphoserine occurs at positions 168, 171, 176, and 199. Positions 201 to 216 (QRSVSSSSPRARAPRV) are enriched in low complexity. Positions 268-290 (DDMKSHRLEDNPGVRRHLVKEPS) are enriched in basic and acidic residues. Arginine 296 carries the post-translational modification Omega-N-methylarginine. Over residues 437 to 450 (SFPRNPSSSSVNSV) the composition is skewed to low complexity. Residues 482–500 (HDPDAKERPLHMPGGDGHR) show a composition bias toward basic and acidic residues. Transmembrane regions (helical) follow at residues 710-732 (VAAVLFIYFAALSPAITFGGLLG), 738-775 (LMGVSELIVSTAVLGVLFSLLGAQPLLVVGFSGPLLVF), 795-817 (VWVGLWLVVFVLALVGAEGTFLV), and 827-848 (IFAFLISLIFIYETFHKLYKVF). Residues 710 to 1233 (VAAVLFIYFA…DEYNELHMPV (524 aa)) form a membrane (anion exchange) region. N-linked (GlcNAc...) asparagine glycosylation is present at asparagine 874. A helical membrane pass occupies residues 894–911 (ALLSLILMLGTFLIAFFL). Topologically, residues 912 to 926 (RKFRNSRFLGGKARR) are cytoplasmic. A run of 5 helical transmembrane segments spans residues 927–947 (IIGDFGIPISILLMVLVDYSI), 981–1003 (PFPPWMMVAAAVPALLVLILIFM), 1029–1050 (LLLIGSLGGLCGLFGLPWLTAA), 1084–1129 (VTGV…IQLS), and 1156–1192 (MHLFTCIQLACIALLWVVKSTAASLAFPFLLLLTVPL). Cysteine 1166 carries the S-palmitoyl cysteine lipid modification.

This sequence belongs to the anion exchanger (TC 2.A.31) family.

Its subcellular location is the cell membrane. It catalyses the reaction hydrogencarbonate(in) + chloride(out) = hydrogencarbonate(out) + chloride(in). Sodium-independent anion exchanger which mediates the electroneutral exchange of chloride for bicarbonate ions across the cell membrane. May be involved in the regulation of intracellular pH, and the modulation of cardiac action potential. The sequence is that of Anion exchange protein 3 (SLC4A3) from Oryctolagus cuniculus (Rabbit).